We begin with the raw amino-acid sequence, 271 residues long: MKI67 FHA domain-interacting nucleolar phosphoprotein (271 aa).

Positions 1 to 20 (MAEYSGPAKPTLALNPREDS) are disordered. Alanine 2 carries the post-translational modification N-acetylalanine. Lysine 37 is covalently cross-linked (Glycyl lysine isopeptide (Lys-Gly) (interchain with G-Cter in SUMO2)). Positions 44-122 (GVVYLGHLPS…RLLSCKFMPR (79 aa)) constitute an RRM domain. Arginine 113 carries the post-translational modification Omega-N-methylarginine. Residues lysine 178 and lysine 191 each participate in a glycyl lysine isopeptide (Lys-Gly) (interchain with G-Cter in SUMO2) cross-link. 2 positions are modified to phosphothreonine: threonine 213 and threonine 217. Omega-N-methylated arginine is present on residues arginine 223 and arginine 224. Serine 226 is subject to Phosphoserine. The segment at 242 to 271 (PVSPVKEDTQKTPAPESSGKKRLRKRKSKQ) is disordered. Residue lysine 247 forms a Glycyl lysine isopeptide (Lys-Gly) (interchain with G-Cter in SUMO1); alternate linkage. Lysine 247 participates in a covalent cross-link: Glycyl lysine isopeptide (Lys-Gly) (interchain with G-Cter in SUMO2); alternate. The span at 261–271 (KKRLRKRKSKQ) shows a compositional bias: basic residues.

Binds to the FHA domain of MKI67; this interaction is enhanced in mitosis. In terms of processing, phosphorylated.

It localises to the nucleus. The protein localises to the nucleolus. Its subcellular location is the chromosome. The sequence is that of MKI67 FHA domain-interacting nucleolar phosphoprotein (Nifk) from Rattus norvegicus (Rat).